The following is a 545-amino-acid chain: 2-succinyl-5-enolpyruvyl-6-hydroxy-3-cyclohexene-1-carboxylate synthase (545 aa).

Over residues 170–185 (QVSGLQRSAPAPSSDS) the composition is skewed to polar residues. Residues 170-193 (QVSGLQRSAPAPSSDSPLGAAPQL) are disordered.

It belongs to the TPP enzyme family. MenD subfamily. In terms of assembly, homodimer. Mg(2+) serves as cofactor. Requires Mn(2+) as cofactor. It depends on thiamine diphosphate as a cofactor.

The catalysed reaction is isochorismate + 2-oxoglutarate + H(+) = 5-enolpyruvoyl-6-hydroxy-2-succinyl-cyclohex-3-ene-1-carboxylate + CO2. It functions in the pathway quinol/quinone metabolism; 1,4-dihydroxy-2-naphthoate biosynthesis; 1,4-dihydroxy-2-naphthoate from chorismate: step 2/7. Its pathway is cofactor biosynthesis; phylloquinone biosynthesis. Catalyzes the thiamine diphosphate-dependent decarboxylation of 2-oxoglutarate and the subsequent addition of the resulting succinic semialdehyde-thiamine pyrophosphate anion to isochorismate to yield 2-succinyl-5-enolpyruvyl-6-hydroxy-3-cyclohexene-1-carboxylate (SEPHCHC). The polypeptide is 2-succinyl-5-enolpyruvyl-6-hydroxy-3-cyclohexene-1-carboxylate synthase (Parasynechococcus marenigrum (strain WH8102)).